Reading from the N-terminus, the 593-residue chain is Copine-5 (593 aa).

Residues 2–134 (EQPEDMASLS…SPGSRLEKPL (133 aa)) enclose the C2 1 domain. Ser19 is subject to Phosphoserine. Positions 38, 44, 98, 100, 103, 108, and 110 each coordinate Ca(2+). Position 103 is a phosphoserine (Ser103). Ser140 carries the phosphoserine modification. The C2 2 domain occupies 161–284 (KCGTIILSAE…ARGQSQFNIY (124 aa)). Asp192, Asp198, Asp254, Asp256, and Asp262 together coordinate Ca(2+). The region spanning 328–554 (NFTVAIDFTA…DVLAEIPDQL (227 aa)) is the VWFA domain. Residues 562-593 (GIRPRPPPAAPTHSPSQSPARTPPASPLHTHI) form a disordered region. Over residues 572-581 (PTHSPSQSPA) the composition is skewed to low complexity.

Belongs to the copine family. The cofactor is Ca(2+). Expressed in the brain, heart, stomach, spleen, lymph node and testis. Expressed in melanocytes.

It localises to the perikaryon. Its subcellular location is the cell projection. Functionally, probable calcium-dependent phospholipid-binding protein that may play a role in calcium-mediated intracellular processes. Plays a role in dendrite formation by melanocytes. The protein is Copine-5 of Homo sapiens (Human).